The sequence spans 154 residues: Myoglobin (154 aa).

One can recognise a Globin domain in the interval 2–148 (GLSEAEWQLV…FRKDIAAKYK (147 aa)). S4 carries the post-translational modification Phosphoserine. H65 is a nitrite binding site. H65 contacts O2. T68 is subject to Phosphothreonine. H94 contacts heme b.

It belongs to the globin family. As to quaternary structure, monomeric.

The protein localises to the cytoplasm. Its subcellular location is the sarcoplasm. The enzyme catalyses Fe(III)-heme b-[protein] + nitric oxide + H2O = Fe(II)-heme b-[protein] + nitrite + 2 H(+). It carries out the reaction H2O2 + AH2 = A + 2 H2O. Functionally, monomeric heme protein which primary function is to store oxygen and facilitate its diffusion within muscle tissues. Reversibly binds oxygen through a pentacoordinated heme iron and enables its timely and efficient release as needed during periods of heightened demand. Depending on the oxidative conditions of tissues and cells, and in addition to its ability to bind oxygen, it also has a nitrite reductase activity whereby it regulates the production of bioactive nitric oxide. Under stress conditions, like hypoxia and anoxia, it also protects cells against reactive oxygen species thanks to its pseudoperoxidase activity. The sequence is that of Myoglobin (MB) from Mesoplodon carlhubbsi (Hubb's beaked whale).